Reading from the N-terminus, the 243-residue chain is MSTDMGTADVGEVDPEAPQPTNIEVHIHQESVLAKLLLAGCSFLRVPASASTQSQGSSRVLVASWVVQIVLGILSVVLGGILYICHYLAMNTQGAPFWTGIVAMLAGAVAFLQKKRGGTCWALMRILLVLASFCTAVAAIVIGSREFNNYWYYLRDDVCKSDTSYRWSTMPSITPVPEEANRIGLCKYYTSMLKTLLISLQAMLLGVWVLLLLASLIPVCVYLWKRFFTKAETEKKLLGAAVI.

Phosphoserine is present on Ser42. 4 consecutive transmembrane segments (helical) span residues 65 to 85 (WVVQ…LYIC), 92 to 112 (TQGA…VAFL), 122 to 142 (ALMR…AIVI), and 204 to 224 (LLGV…VYLW).

It belongs to the TMEM176 family. Interacts with MCOLN2.

Its subcellular location is the membrane. The chain is Transmembrane protein 176A (Tmem176a) from Rattus norvegicus (Rat).